A 197-amino-acid polypeptide reads, in one-letter code: Protein tyrosine phosphatase receptor type C-associated protein (197 aa).

The helical transmembrane segment at 33-53 (VVTIVLLLLLLLLLVTALALA) threads the bilayer. A phosphoserine mark is found at serine 99 and serine 103. 2 disordered regions span residues 120 to 164 (GPEE…GSSA) and 177 to 197 (SAAW…VTAL). Over residues 124–145 (AAAKEEEQRCQAEQTRDPRDTD) the composition is skewed to basic and acidic residues.

In terms of assembly, interacts with CD45/PTPRC. Phosphorylated on tyrosine residues. In terms of tissue distribution, leukocyte-specific. Expressed in B- and T-cell lines, in spleen, thymus, and bone marrow of adult mice, and in embryos.

It is found in the membrane. This is Protein tyrosine phosphatase receptor type C-associated protein (Ptprcap) from Mus musculus (Mouse).